Here is a 104-residue protein sequence, read N- to C-terminus: Large ribosomal subunit protein uL24 (104 aa).

The protein belongs to the universal ribosomal protein uL24 family. As to quaternary structure, part of the 50S ribosomal subunit.

Functionally, one of two assembly initiator proteins, it binds directly to the 5'-end of the 23S rRNA, where it nucleates assembly of the 50S subunit. Its function is as follows. One of the proteins that surrounds the polypeptide exit tunnel on the outside of the subunit. This Dichelobacter nodosus (strain VCS1703A) protein is Large ribosomal subunit protein uL24.